A 125-amino-acid polypeptide reads, in one-letter code: MTERIPPELQTQLVKLQQLQDQLNRLLTEKNVIDSELREVNKILQELSQLPAGTTVYKIVGNLLVKTDKETVQKELDDRKEILELRSRTYQKQENLLRTQLEDLQKKVNELLAKYYPQSGGAIKA.

The protein belongs to the prefoldin subunit beta family. Heterohexamer of two alpha and four beta subunits.

Its subcellular location is the cytoplasm. Functionally, molecular chaperone capable of stabilizing a range of proteins. Seems to fulfill an ATP-independent, HSP70-like function in archaeal de novo protein folding. In Sulfurisphaera tokodaii (strain DSM 16993 / JCM 10545 / NBRC 100140 / 7) (Sulfolobus tokodaii), this protein is Prefoldin subunit beta (pfdB).